The primary structure comprises 700 residues: Elongation factor G (700 aa).

The tr-type G domain maps to 8 to 290 (ERYRNIGISA…AVIDYLPAPT (283 aa)). GTP is bound by residues 17–24 (AHIDAGKT), 88–92 (DTPGH), and 142–145 (NKMD).

Belongs to the TRAFAC class translation factor GTPase superfamily. Classic translation factor GTPase family. EF-G/EF-2 subfamily.

It localises to the cytoplasm. Its function is as follows. Catalyzes the GTP-dependent ribosomal translocation step during translation elongation. During this step, the ribosome changes from the pre-translocational (PRE) to the post-translocational (POST) state as the newly formed A-site-bound peptidyl-tRNA and P-site-bound deacylated tRNA move to the P and E sites, respectively. Catalyzes the coordinated movement of the two tRNA molecules, the mRNA and conformational changes in the ribosome. The sequence is that of Elongation factor G from Glaesserella parasuis serovar 5 (strain SH0165) (Haemophilus parasuis).